The primary structure comprises 308 residues: Putative glutamine amidotransferase Rv2859c (308 aa).

The segment at 1–62 (MDLSASRSDG…ASPRLRSPLG (62 aa)) is disordered. 3 stretches are compositionally biased toward low complexity: residues 13–24 (PLRPASPRLRSP), 31–42 (PLRPASPRLRSP), and 49–61 (PLRP…RSPL). Positions 78–301 (RTGVWDIPAG…VDAASGYAGR (224 aa)) constitute a Glutamine amidotransferase type-1 domain. The active-site Nucleophile is the Cys177. Catalysis depends on residues His277 and Glu279. Residue Lys289 forms an Isoglutamyl lysine isopeptide (Lys-Gln) (interchain with Q-Cter in protein Pup) linkage.

The chain is Putative glutamine amidotransferase Rv2859c from Mycobacterium tuberculosis (strain ATCC 25618 / H37Rv).